The sequence spans 30 residues: Bacteriocin plantaricin KL-1Y (30 aa).

It localises to the secreted. In terms of biological role, bacteriocin with activity against species of Lactobacillus, Lactococcus, Pediococcus, Leuconostoc and against B.subtilis and, to a lesser extent, against B.coagulans, B.cereus and species of Enterococcus, Listeria, Kocuria, Staphylococcus, Corynebacterium, Salmonella, Pseudomonas and Escherichia. This chain is Bacteriocin plantaricin KL-1Y, found in Lactiplantibacillus plantarum (Lactobacillus plantarum).